The following is a 146-amino-acid chain: Ecotin-like protein 1 (146 aa).

Belongs to the protease inhibitor I11 (ecotin) family.

In Leishmania braziliensis, this protein is Ecotin-like protein 1 (ISP1).